We begin with the raw amino-acid sequence, 326 residues long: Pyruvate dehydrogenase E1 component subunit beta (326 aa).

Glu60 contacts thiamine diphosphate. The K(+) site is built by Ile113, Ala161, Ile162, and Asn166.

As to quaternary structure, heterodimer of an alpha and a beta chain. It depends on thiamine diphosphate as a cofactor.

The protein resides in the plastid. It is found in the chloroplast. The catalysed reaction is N(6)-[(R)-lipoyl]-L-lysyl-[protein] + pyruvate + H(+) = N(6)-[(R)-S(8)-acetyldihydrolipoyl]-L-lysyl-[protein] + CO2. The pyruvate dehydrogenase complex catalyzes the overall conversion of pyruvate to acetyl-CoA and CO(2). It contains multiple copies of three enzymatic components: pyruvate dehydrogenase (E1), dihydrolipoamide acetyltransferase (E2) and lipoamide dehydrogenase (E3). This chain is Pyruvate dehydrogenase E1 component subunit beta (pdhB), found in Chaetosphaeridium globosum (Charophycean green alga).